The sequence spans 498 residues: Putative F-box/FBD/LRR-repeat protein At4g03220 (498 aa).

An F-box domain is found at 23 to 71; that stretch reads VDRISNLPDSLNHQILLLLPLKSAAQASLLSKRWRSLFLSLPDLDFTSI. LRR repeat units lie at residues 148 to 172, 175 to 200, and 235 to 259; these read SQNLRALTLKSANLGFRLPPSSSAR, FQKLTSLSLSRVILHNQPCLSDFFTD, and SLQLEGLEVSGNKLQKLKVESCFYS. Residues 416–466 form the FBD domain; the sequence is YWESQAYELESFLNHLEFVEIHGFVECENEMSLAIFLLRHGKALIKMTLRS.

The sequence is that of Putative F-box/FBD/LRR-repeat protein At4g03220 from Arabidopsis thaliana (Mouse-ear cress).